A 246-amino-acid polypeptide reads, in one-letter code: Proteasome subunit alpha (246 aa).

It belongs to the peptidase T1A family. In terms of assembly, the 20S proteasome core is composed of 14 alpha and 14 beta subunits that assemble into four stacked heptameric rings, resulting in a barrel-shaped structure. The two inner rings, each composed of seven catalytic beta subunits, are sandwiched by two outer rings, each composed of seven alpha subunits. The catalytic chamber with the active sites is on the inside of the barrel. Has a gated structure, the ends of the cylinder being occluded by the N-termini of the alpha-subunits. Is capped at one or both ends by the proteasome regulatory ATPase, PAN.

The protein localises to the cytoplasm. The formation of the proteasomal ATPase PAN-20S proteasome complex, via the docking of the C-termini of PAN into the intersubunit pockets in the alpha-rings, triggers opening of the gate for substrate entry. Interconversion between the open-gate and close-gate conformations leads to a dynamic regulation of the 20S proteasome proteolysis activity. In terms of biological role, component of the proteasome core, a large protease complex with broad specificity involved in protein degradation. In Methanopyrus kandleri (strain AV19 / DSM 6324 / JCM 9639 / NBRC 100938), this protein is Proteasome subunit alpha.